Reading from the N-terminus, the 144-residue chain is Nucleoside diphosphate kinase (144 aa).

ATP contacts are provided by lysine 11, phenylalanine 59, arginine 87, threonine 93, arginine 104, and asparagine 114. The active-site Pros-phosphohistidine intermediate is the histidine 117.

The protein belongs to the NDK family. As to quaternary structure, homotetramer. The cofactor is Mg(2+).

Its subcellular location is the cytoplasm. The catalysed reaction is a 2'-deoxyribonucleoside 5'-diphosphate + ATP = a 2'-deoxyribonucleoside 5'-triphosphate + ADP. It carries out the reaction a ribonucleoside 5'-diphosphate + ATP = a ribonucleoside 5'-triphosphate + ADP. Its function is as follows. Major role in the synthesis of nucleoside triphosphates other than ATP. The ATP gamma phosphate is transferred to the NDP beta phosphate via a ping-pong mechanism, using a phosphorylated active-site intermediate. The polypeptide is Nucleoside diphosphate kinase (Psychromonas ingrahamii (strain DSM 17664 / CCUG 51855 / 37)).